Here is a 537-residue protein sequence, read N- to C-terminus: Tyrosine-protein kinase Fyn (537 aa).

A lipid anchor (N-myristoyl glycine) is attached at Gly-2. Residues Cys-3 and Cys-6 are each lipidated (S-palmitoyl cysteine). Position 12 is a phosphothreonine; by PKC (Thr-12). One can recognise an SH3 domain in the interval 82–143 (TGVTLFVALY…PSNYVAPVDS (62 aa)). Residues 149–246 (WYFGKLGRKD…GLCCRLVVPC (98 aa)) enclose the SH2 domain. Positions 271 to 524 (LQLIKRLGNG…YLQGFLEDYF (254 aa)) constitute a Protein kinase domain. Residues 277–285 (LGNGQFGEV) and Lys-299 contribute to the ATP site. The Proton acceptor role is filled by Asp-390. Tyr-420 carries the post-translational modification Phosphotyrosine; by autocatalysis. A Phosphotyrosine modification is found at Tyr-531.

It belongs to the protein kinase superfamily. Tyr protein kinase family. SRC subfamily. As to quaternary structure, associates through its SH3 domain, to the p85 subunit of phosphatidylinositol 3-kinase. Requires Mn(2+) as cofactor.

It catalyses the reaction L-tyrosyl-[protein] + ATP = O-phospho-L-tyrosyl-[protein] + ADP + H(+). Its activity is regulated as follows. Inhibited by phosphorylation of Tyr-531 by leukocyte common antigen and activated by dephosphorylation of this site. Functionally, tyrosine-protein kinase implicated in the control of cell growth. Plays a role in the regulation of intracellular calcium levels. Required in brain development and mature brain function with important roles in the regulation of axon growth, axon guidance, and neurite extension. Blocks axon outgrowth and attraction induced by ntn1 by phosphorylating its receptor ddc. This is Tyrosine-protein kinase Fyn (fyn) from Xenopus laevis (African clawed frog).